Reading from the N-terminus, the 483-residue chain is Aspartyl/glutamyl-tRNA(Asn/Gln) amidotransferase subunit B (483 aa).

The protein belongs to the GatB/GatE family. GatB subfamily. As to quaternary structure, heterotrimer of A, B and C subunits.

The enzyme catalyses L-glutamyl-tRNA(Gln) + L-glutamine + ATP + H2O = L-glutaminyl-tRNA(Gln) + L-glutamate + ADP + phosphate + H(+). It catalyses the reaction L-aspartyl-tRNA(Asn) + L-glutamine + ATP + H2O = L-asparaginyl-tRNA(Asn) + L-glutamate + ADP + phosphate + 2 H(+). Functionally, allows the formation of correctly charged Asn-tRNA(Asn) or Gln-tRNA(Gln) through the transamidation of misacylated Asp-tRNA(Asn) or Glu-tRNA(Gln) in organisms which lack either or both of asparaginyl-tRNA or glutaminyl-tRNA synthetases. The reaction takes place in the presence of glutamine and ATP through an activated phospho-Asp-tRNA(Asn) or phospho-Glu-tRNA(Gln). This is Aspartyl/glutamyl-tRNA(Asn/Gln) amidotransferase subunit B from Rickettsia rickettsii (strain Iowa).